The sequence spans 351 residues: N-acetyl-gamma-glutamyl-phosphate reductase (351 aa).

The active site involves Cys-150.

The protein belongs to the NAGSA dehydrogenase family. Type 1 subfamily.

The protein resides in the cytoplasm. The catalysed reaction is N-acetyl-L-glutamate 5-semialdehyde + phosphate + NADP(+) = N-acetyl-L-glutamyl 5-phosphate + NADPH + H(+). It participates in amino-acid biosynthesis; L-arginine biosynthesis; N(2)-acetyl-L-ornithine from L-glutamate: step 3/4. In terms of biological role, catalyzes the NADPH-dependent reduction of N-acetyl-5-glutamyl phosphate to yield N-acetyl-L-glutamate 5-semialdehyde. This chain is N-acetyl-gamma-glutamyl-phosphate reductase, found in Heliobacterium modesticaldum (strain ATCC 51547 / Ice1).